Consider the following 536-residue polypeptide: CUGBP Elav-like family member 2 (536 aa).

RRM domains are found at residues 58–141 (IKMF…PADS), 150–230 (RKLF…FADT), and 451–529 (ANLF…LKRS).

This sequence belongs to the CELF/BRUNOL family.

The protein resides in the nucleus. It is found in the cytoplasm. Its function is as follows. RNA-binding protein implicated in the regulation of several post-transcriptional events. May be involved in pre-mRNA alternative splicing, mRNA translation repression and stability. The polypeptide is CUGBP Elav-like family member 2 (celf2) (Xenopus laevis (African clawed frog)).